We begin with the raw amino-acid sequence, 360 residues long: Decorin (360 aa).

A signal peptide spans 1–16 (MKATIIFLLLAQVSWA). The propeptide occupies 17–30 (GPFQQRGLFDFMLE). An O-linked (Xyl...) (glycosaminoglycan) serine glycan is attached at Ser-34. Cystine bridges form between Cys-55-Cys-61 and Cys-59-Cys-68. LRR repeat units follow at residues 74 to 94 (DKVPKDLPPDTTLLDLQNNKI), 95 to 118 (TEIKDGDFKNLKNLHALILVNNKI), 119 to 142 (SKISPGAFTPLVKLERLYLSKNHL), 143 to 163 (KELPEKMPKTLQELRVHENEI), 164 to 187 (TKVRKAVFNGLNQMIVVELGTNPL), 188 to 213 (KSSGIENGAFQGMKKLSYIRIADTNI), 214 to 234 (TTIPPGLPPSLTELHLDGNKI), 235 to 258 (TKVDAASLRGLNNLAKLGLSFNSI), 259 to 282 (SAVDNGSLANTPHLRELHLDNNKL), 283 to 305 (IKVPGGLADHKYIQVVYLHNNNI), 306 to 335 (SAVGSNDFCPPGYNTKKASYSGVSLFSNPV), and 336 to 360 (QYWEIQPSTFRCVYVRSAIQLGNYK). N-linked (GlcNAc...) asparagine glycosylation is present at Asn-212. Residues Asn-263 and Asn-304 are each glycosylated (N-linked (GlcNAc...) asparagine). Cys-314 and Cys-347 form a disulfide bridge.

It belongs to the small leucine-rich proteoglycan (SLRP) family. SLRP class I subfamily. Binds to type I and type II collagen, fibronectin and TGF-beta. Forms a ternary complex with MFAP2 and ELN. Interacts with DPT. The attached glycosaminoglycan chain can be either chondroitin sulfate or dermatan sulfate depending upon the tissue of origin.

The protein localises to the secreted. It is found in the extracellular space. It localises to the extracellular matrix. Its function is as follows. May affect the rate of fibrils formation. This Equus caballus (Horse) protein is Decorin (DCN).